A 1190-amino-acid chain; its full sequence is PAN2-PAN3 deadenylation complex catalytic subunit PAN2 (1190 aa).

6 WD repeats span residues 24 to 63, 129 to 166, 167 to 207, 222 to 264, 266 to 306, and 322 to 361; these read TTIV…NSLY, NKFN…PNVL, SSFD…TMKT, GNYI…AIAP, PFPA…NVYL, and NNKP…KDFV. Positions 364–511 are linker; that stretch reads PQPVEQPDII…FQYKFQGKLN (148 aa). In terms of domain architecture, USP spans 512 to 924; it reads KVPNCYSRLQ…KPIVIMYQQT (413 aa). The region spanning 988–1158 is the Exonuclease domain; the sequence is VAIDAEFVML…EDANTALLLY (171 aa). Asp991, Glu993, Asp1097, and Asp1150 together coordinate a divalent metal cation.

This sequence belongs to the peptidase C19 family. PAN2 subfamily. Forms a heterotrimer with an asymmetric homodimer of the regulatory subunit PAN3 to form the poly(A)-nuclease (PAN) deadenylation complex. A divalent metal cation is required as a cofactor.

Its subcellular location is the cytoplasm. It carries out the reaction Exonucleolytic cleavage of poly(A) to 5'-AMP.. Positively regulated by the regulatory subunit PAN3. In terms of biological role, catalytic subunit of the poly(A)-nuclease (PAN) deadenylation complex, one of two cytoplasmic mRNA deadenylases involved in mRNA turnover. PAN specifically shortens poly(A) tails of RNA and the activity is stimulated by poly(A)-binding protein PAB1. PAN deadenylation is followed by rapid degradation of the shortened mRNA tails by the CCR4-NOT complex. Deadenylated mRNAs are then degraded by two alternative mechanisms, namely exosome-mediated 3'-5' exonucleolytic degradation, or deadenylation-dependent mRNA decaping and subsequent 5'-3' exonucleolytic degradation by XRN1. May also be involved in post-transcriptional maturation of mRNA poly(A) tails. The chain is PAN2-PAN3 deadenylation complex catalytic subunit PAN2 from Candida albicans (strain SC5314 / ATCC MYA-2876) (Yeast).